Reading from the N-terminus, the 251-residue chain is MTEAQRHQILLEMLAQLGFVTVEKVVERLGISPATARRDINKLDESGKLKKVRNGAEAITQQRPRWTPMNLHQAQNHDEKVRIAKAASQLVNPGESVVINCGSTAFLLGREMCGKPVQIITNYLPLANYLIDQEHDSVIIMGGQYNKSQSITLSPQGSENSLYAGHWMFTSGKGLTAEGLYKTDMLTAMAEQKMLSVVGKLVVLVDSSKIGERAGMLFSRADQIDMLITGKNANPEILQQLEAQGVSIMRV.

The region spanning 3 to 58 is the HTH deoR-type domain; that stretch reads EAQRHQILLEMLAQLGFVTVEKVVERLGISPATARRDINKLDESGKLKKVRNGAEA. The H-T-H motif DNA-binding region spans 20 to 39; that stretch reads VTVEKVVERLGISPATARRD.

The protein resides in the cytoplasm. Its function is as follows. Represses ulaG and the ulaABCDEF operon. The sequence is that of HTH-type transcriptional regulator UlaR from Escherichia coli O127:H6 (strain E2348/69 / EPEC).